We begin with the raw amino-acid sequence, 327 residues long: Pumilio homolog 18 (327 aa).

The 324-residue stretch at 1 to 324 folds into the PUM-HD domain; it reads MAVADNPFSM…NIANILDSFR (324 aa). 6 Pumilio repeats span residues 79 to 114, 115 to 149, 150 to 185, 186 to 222, 223 to 260, and 261 to 295; these read SDSD…FCAA, ILRR…ALYE, RILY…DQLL, ELVA…NIAV, NLYG…ELLG, and CDGD…DLFW.

It is found in the cytoplasm. Sequence-specific RNA-binding protein that regulates translation and mRNA stability by binding the 3'-UTR of target mRNAs. This is Pumilio homolog 18 (APUM18) from Arabidopsis thaliana (Mouse-ear cress).